A 169-amino-acid chain; its full sequence is Neudesin (169 aa).

The signal sequence occupies residues 1–28; it reads MAGPAPGRRLVALALIVALAVGLPTAGA. In terms of domain architecture, Cytochrome b5 heme-binding spans 41–126; the sequence is VRLFTEEELA…EELESLDDVF (86 aa). K133 bears the N6-acetyllysine mark. Residues 148-169 form a disordered region; sequence DGSPNLDFKPEDQPHFDIKDEF. Positions 155–169 are enriched in basic and acidic residues; the sequence is FKPEDQPHFDIKDEF.

This sequence belongs to the cytochrome b5 family. MAPR subfamily. In terms of assembly, interacts with PINK1 and PARK7.

The protein localises to the secreted. Its subcellular location is the extracellular space. The protein resides in the mitochondrion. It is found in the endoplasmic reticulum. Its function is as follows. Acts as a neurotrophic factor in postnatal mature neurons enhancing neuronal survival. Promotes cell proliferation and neurogenesis in undifferentiated neural progenitor cells at the embryonic stage and inhibits differentiation of astrocytes. Its neurotrophic activity is exerted via MAPK1/ERK2, MAPK3/ERK1 and AKT1/AKT pathways. Neurotrophic activity is enhanced by binding to heme. Also acts as an anorexigenic neurotrophic factor that contributes to energy balance. The chain is Neudesin (NENF) from Bos taurus (Bovine).